The chain runs to 429 residues: Serine hydroxymethyltransferase (429 aa).

(6S)-5,6,7,8-tetrahydrofolate contacts are provided by residues leucine 126 and 130 to 132 (GHL). At lysine 235 the chain carries N6-(pyridoxal phosphate)lysine.

The protein belongs to the SHMT family. As to quaternary structure, homodimer. The cofactor is pyridoxal 5'-phosphate.

It localises to the cytoplasm. It carries out the reaction (6R)-5,10-methylene-5,6,7,8-tetrahydrofolate + glycine + H2O = (6S)-5,6,7,8-tetrahydrofolate + L-serine. It functions in the pathway one-carbon metabolism; tetrahydrofolate interconversion. Its pathway is amino-acid biosynthesis; glycine biosynthesis; glycine from L-serine: step 1/1. Catalyzes the reversible interconversion of serine and glycine with tetrahydrofolate (THF) serving as the one-carbon carrier. This reaction serves as the major source of one-carbon groups required for the biosynthesis of purines, thymidylate, methionine, and other important biomolecules. Also exhibits THF-independent aldolase activity toward beta-hydroxyamino acids, producing glycine and aldehydes, via a retro-aldol mechanism. The chain is Serine hydroxymethyltransferase from Zymomonas mobilis subsp. mobilis (strain ATCC 31821 / ZM4 / CP4).